The sequence spans 308 residues: Cell division protein FtsQ (308 aa).

Topologically, residues 1–53 are cytoplasmic; that stretch reads MDSGGRIVYALNVEKTGFLRILSVTVLQRLYRRVFWFLFKCVAGIDVPRHAGS. Residues 54 to 74 traverse the membrane as a helical segment; the sequence is LAVFSFFFLSILYSISSGGYM. Residues 75-308 are Periplasmic-facing; sequence NHFMKVAISN…LLKMLKAGSV (234 aa). A POTRA domain is found at 87–155; it reads FLVTHVDMSG…DRLRISLVER (69 aa).

The protein belongs to the FtsQ/DivIB family. FtsQ subfamily.

It is found in the cell inner membrane. Its function is as follows. Essential cell division protein. The sequence is that of Cell division protein FtsQ from Bartonella bacilliformis.